The sequence spans 454 residues: GTPase Der (454 aa).

2 EngA-type G domains span residues 3-167 (PVIT…GIAE) and 181-354 (MKIA…AAAM). GTP-binding positions include 9–16 (GRPNVGKS), 56–60 (DTGGF), 119–122 (NKTE), 187–194 (GRPNVGKS), 234–238 (DTAGL), and 299–302 (NKWD). The KH-like domain occupies 355 to 439 (AKLPTPRLTR…PLRIQMNTAK (85 aa)).

Belongs to the TRAFAC class TrmE-Era-EngA-EngB-Septin-like GTPase superfamily. EngA (Der) GTPase family. Associates with the 50S ribosomal subunit.

GTPase that plays an essential role in the late steps of ribosome biogenesis. The protein is GTPase Der of Polynucleobacter asymbioticus (strain DSM 18221 / CIP 109841 / QLW-P1DMWA-1) (Polynucleobacter necessarius subsp. asymbioticus).